A 478-amino-acid chain; its full sequence is 7-dehydrocholesterol reductase (478 aa).

Positions 1 to 28 are disordered; it reads MMASDRVRKRHKGSANGAQTVEKEPSKE. 6 helical membrane-spanning segments follow: residues 43-63, 97-117, 180-200, 269-289, 309-329, and 333-353; these read LSGV…FIMA, WAAA…YMCV, WIPL…FAFI, VTNS…DFFW, LGWG…LYLV, and IQLS…GYYI. Residues Lys361, Arg365, Met398, Trp403, and 410–411 contribute to the NADP(+) site; that span reads NY. A helical transmembrane segment spans residues 424 to 444; that stretch reads ACGGNHLLPYFYIIYMTILLV. NADP(+) is bound by residues Asp450, 454–458, and Tyr465; that span reads CSNKY.

Belongs to the ERG4/ERG24 family.

It is found in the endoplasmic reticulum membrane. The catalysed reaction is cholesterol + NADP(+) = 7-dehydrocholesterol + NADPH + H(+). It carries out the reaction 7-dehydrodesmosterol + NADPH + H(+) = desmosterol + NADP(+). It participates in steroid biosynthesis; cholesterol biosynthesis. Functionally, catalyzes the last step of the cholesterol synthesis pathway, which transforms cholesta-5,7-dien-3beta-ol (7-dehydrocholesterol,7-DHC) into cholesterol by reducing the C7-C8 double bond of its sterol core. Can also metabolize cholesta-5,7,24-trien-3beta-ol (7-dehydrodemosterol, 7-DHD) to desmosterol, which is then metabolized by the Delta(24)-sterol reductase (DHCR24) to cholesterol. Modulates ferroptosis (a form of regulated cell death driven by iron-dependent lipid peroxidation) through the metabolic breakdown of the anti-ferroptotic metabolites 7-DHC and 7-DHD which, when accumulated, divert the propagation of peroxyl radical-mediated damage from phospholipid components to its sterol core, protecting plasma and mitochondrial membranes from phospholipid autoxidation. This is 7-dehydrocholesterol reductase (dhcr7) from Danio rerio (Zebrafish).